Reading from the N-terminus, the 66-residue chain is Conotoxin Lt3.5 (66 aa).

An N-terminal signal peptide occupies residues 1–20; that stretch reads MMSKLGALLTICLLLFPLTA. Positions 21-53 are excised as a propeptide; that stretch reads VPLDGDQPLDRHAERMHDGISPKRHPWFDPVKR. 3 disulfides stabilise this stretch: cysteine 54–cysteine 66, cysteine 55–cysteine 62, and cysteine 59–cysteine 65. At proline 64 the chain carries 4-hydroxyproline.

The protein belongs to the conotoxin M superfamily. In terms of tissue distribution, expressed by the venom duct.

The protein resides in the secreted. In Conus litteratus (Lettered cone), this protein is Conotoxin Lt3.5.